Consider the following 416-residue polypeptide: Serine hydroxymethyltransferase (416 aa).

Residues Leu121 and 125–127 (GHL) each bind (6S)-5,6,7,8-tetrahydrofolate. Lys229 bears the N6-(pyridoxal phosphate)lysine mark.

It belongs to the SHMT family. In terms of assembly, homodimer. It depends on pyridoxal 5'-phosphate as a cofactor.

It localises to the cytoplasm. The enzyme catalyses (6R)-5,10-methylene-5,6,7,8-tetrahydrofolate + glycine + H2O = (6S)-5,6,7,8-tetrahydrofolate + L-serine. It participates in one-carbon metabolism; tetrahydrofolate interconversion. Its pathway is amino-acid biosynthesis; glycine biosynthesis; glycine from L-serine: step 1/1. In terms of biological role, catalyzes the reversible interconversion of serine and glycine with tetrahydrofolate (THF) serving as the one-carbon carrier. This reaction serves as the major source of one-carbon groups required for the biosynthesis of purines, thymidylate, methionine, and other important biomolecules. Also exhibits THF-independent aldolase activity toward beta-hydroxyamino acids, producing glycine and aldehydes, via a retro-aldol mechanism. This is Serine hydroxymethyltransferase from Neisseria gonorrhoeae (strain NCCP11945).